Here is a 155-residue protein sequence, read N- to C-terminus: 6,7-dimethyl-8-ribityllumazine synthase (155 aa).

5-amino-6-(D-ribitylamino)uracil contacts are provided by residues phenylalanine 23, 57 to 59 (AFE), and 81 to 83 (AVI). (2S)-2-hydroxy-3-oxobutyl phosphate is bound at residue 86–87 (ST). Histidine 89 acts as the Proton donor in catalysis. A 5-amino-6-(D-ribitylamino)uracil-binding site is contributed by phenylalanine 114. Arginine 128 contributes to the (2S)-2-hydroxy-3-oxobutyl phosphate binding site.

This sequence belongs to the DMRL synthase family.

It carries out the reaction (2S)-2-hydroxy-3-oxobutyl phosphate + 5-amino-6-(D-ribitylamino)uracil = 6,7-dimethyl-8-(1-D-ribityl)lumazine + phosphate + 2 H2O + H(+). It participates in cofactor biosynthesis; riboflavin biosynthesis; riboflavin from 2-hydroxy-3-oxobutyl phosphate and 5-amino-6-(D-ribitylamino)uracil: step 1/2. Catalyzes the formation of 6,7-dimethyl-8-ribityllumazine by condensation of 5-amino-6-(D-ribitylamino)uracil with 3,4-dihydroxy-2-butanone 4-phosphate. This is the penultimate step in the biosynthesis of riboflavin. This chain is 6,7-dimethyl-8-ribityllumazine synthase, found in Dehalococcoides mccartyi (strain ATCC BAA-2100 / JCM 16839 / KCTC 5957 / BAV1).